A 435-amino-acid chain; its full sequence is 3-phosphoshikimate 1-carboxyvinyltransferase (435 aa).

The 3-phosphoshikimate site is built by lysine 21, serine 22, and arginine 26. Residue lysine 21 participates in phosphoenolpyruvate binding. Phosphoenolpyruvate-binding residues include glycine 100 and arginine 128. 3-phosphoshikimate contacts are provided by serine 171, serine 172, glutamine 173, serine 199, aspartate 313, and lysine 340. A phosphoenolpyruvate-binding site is contributed by glutamine 173. Aspartate 313 functions as the Proton acceptor in the catalytic mechanism. Phosphoenolpyruvate contacts are provided by arginine 344, arginine 386, and lysine 412.

Belongs to the EPSP synthase family. As to quaternary structure, monomer.

The protein resides in the cytoplasm. It carries out the reaction 3-phosphoshikimate + phosphoenolpyruvate = 5-O-(1-carboxyvinyl)-3-phosphoshikimate + phosphate. It functions in the pathway metabolic intermediate biosynthesis; chorismate biosynthesis; chorismate from D-erythrose 4-phosphate and phosphoenolpyruvate: step 6/7. Its function is as follows. Catalyzes the transfer of the enolpyruvyl moiety of phosphoenolpyruvate (PEP) to the 5-hydroxyl of shikimate-3-phosphate (S3P) to produce enolpyruvyl shikimate-3-phosphate and inorganic phosphate. The polypeptide is 3-phosphoshikimate 1-carboxyvinyltransferase (Clostridium novyi (strain NT)).